We begin with the raw amino-acid sequence, 222 residues long: MLFVKERDIVVPGEKLAGNDYIAGRGTFIEEDKIYSSVVGLVSIKGKRIEVIPLQGKYIPKKNDSVIGKVVDVKFARWIVDIRSPYSAILPVSEVIDKGKKNLEEIFGIGDTLFLKIIEVDEVKKVKLGLHEGGPIKLEGGTLAYITPSKVPRVIGRKGSMIKMLKKLTNCEILLGQNGVIWVKGDKKMEEIVKRALEMIDREAHTSGLTDRVKEFIIRSIE.

Positions 63–131 constitute an S1 motif domain; the sequence is NDSVIGKVVD…EVKKVKLGLH (69 aa). The region spanning 139–200 is the KH domain; that stretch reads EGGTLAYITP…EIVKRALEMI (62 aa).

Belongs to the RRP4 family. Component of the archaeal exosome complex. Forms a trimer of Rrp4 and/or Csl4 subunits. The trimer associates with a hexameric ring-like arrangement composed of 3 Rrp41-Rrp42 heterodimers.

It localises to the cytoplasm. Functionally, non-catalytic component of the exosome, which is a complex involved in RNA degradation. Increases the RNA binding and the efficiency of RNA degradation. Confers strong poly(A) specificity to the exosome. The chain is Exosome complex component Rrp4 from Methanothermus fervidus (strain ATCC 43054 / DSM 2088 / JCM 10308 / V24 S).